The primary structure comprises 328 residues: MIYQMQMPAKIEVDEATHTDQYGRFIAQPLERGYGVTLGNMMRRVLLASLPGTAITGIKVDGVFHEFSSIEGVREDVPEIVLNLKKVRFKSTCKRSCKTTLSIVGPKDFTAGDIVAQEGEFEVLNKDLYIATVNEGSTLNIDVYIGRGRGYTPAEESRPDSMPIGYIAIDAIYTPIRNVKFAVENTRVGQRTDYEKMVLDVETDGSITPDDSISLAGRIINEHVTFFANFSPTEEEFTEEEYKQQDDEFETMRRLLNTKIEDLDLSVRSHNCLRLAEIDTIGDLVSRKEDELLNYKNFGKKSLTELKEQLEKFELKFGMDITRYQMKG.

The interval 1-231 (MIYQMQMPAK…EHVTFFANFS (231 aa)) is alpha N-terminal domain (alpha-NTD). The segment at 247–328 (DEFETMRRLL…MDITRYQMKG (82 aa)) is alpha C-terminal domain (alpha-CTD).

Belongs to the RNA polymerase alpha chain family. As to quaternary structure, homodimer. The RNAP catalytic core consists of 2 alpha, 1 beta, 1 beta' and 1 omega subunit. When a sigma factor is associated with the core the holoenzyme is formed, which can initiate transcription.

It carries out the reaction RNA(n) + a ribonucleoside 5'-triphosphate = RNA(n+1) + diphosphate. DNA-dependent RNA polymerase catalyzes the transcription of DNA into RNA using the four ribonucleoside triphosphates as substrates. In Chlorobium luteolum (strain DSM 273 / BCRC 81028 / 2530) (Pelodictyon luteolum), this protein is DNA-directed RNA polymerase subunit alpha.